The following is a 370-amino-acid chain: Chaperone protein DnaJ (370 aa).

One can recognise a J domain in the interval 6-70; the sequence is DYYEVLGVQR…EKRSMYDRFG (65 aa). The segment at 128–208 adopts a CR-type zinc-finger fold; sequence GVEKTIEFRR…CRGEGRVRQT (81 aa). Cysteine 141, cysteine 144, cysteine 158, cysteine 161, cysteine 182, cysteine 185, cysteine 196, and cysteine 199 together coordinate Zn(2+). CXXCXGXG motif repeat units lie at residues 141 to 148, 158 to 165, 182 to 189, and 196 to 203; these read CPACRGSG, CPKCGGLG, CDMCRGEG, and CRECRGEG.

The protein belongs to the DnaJ family. Homodimer. It depends on Zn(2+) as a cofactor.

It is found in the cytoplasm. In terms of biological role, participates actively in the response to hyperosmotic and heat shock by preventing the aggregation of stress-denatured proteins and by disaggregating proteins, also in an autonomous, DnaK-independent fashion. Unfolded proteins bind initially to DnaJ; upon interaction with the DnaJ-bound protein, DnaK hydrolyzes its bound ATP, resulting in the formation of a stable complex. GrpE releases ADP from DnaK; ATP binding to DnaK triggers the release of the substrate protein, thus completing the reaction cycle. Several rounds of ATP-dependent interactions between DnaJ, DnaK and GrpE are required for fully efficient folding. Also involved, together with DnaK and GrpE, in the DNA replication of plasmids through activation of initiation proteins. The protein is Chaperone protein DnaJ of Roseiflexus sp. (strain RS-1).